Here is a 346-residue protein sequence, read N- to C-terminus: DNA-directed RNA polymerase subunit alpha (346 aa).

Positions 1–233 (MLRDEVAVSA…DLFIPFLHAE (233 aa)) are alpha N-terminal domain (alpha-NTD). An alpha C-terminal domain (alpha-CTD) region spans residues 268–346 (IELKCIFIDQ…NKFLIGNPSE (79 aa)).

Belongs to the RNA polymerase alpha chain family. As to quaternary structure, in plastids the minimal PEP RNA polymerase catalytic core is composed of four subunits: alpha, beta, beta', and beta''. When a (nuclear-encoded) sigma factor is associated with the core the holoenzyme is formed, which can initiate transcription.

Its subcellular location is the plastid. It is found in the chloroplast. It carries out the reaction RNA(n) + a ribonucleoside 5'-triphosphate = RNA(n+1) + diphosphate. DNA-dependent RNA polymerase catalyzes the transcription of DNA into RNA using the four ribonucleoside triphosphates as substrates. The protein is DNA-directed RNA polymerase subunit alpha of Ranunculus macranthus (Large buttercup).